The sequence spans 340 residues: Hydroxyurea phosphotransferase (340 aa).

The Proton acceptor role is filled by Asp240.

It belongs to the aminoglycoside phosphotransferase family.

Potential phosphotransferase that inactivates hydroxyurea by phosphorylation of the hydroxy group in the hydroxylamine moiety. This is Hydroxyurea phosphotransferase (hur) from Kitasatospora aureofaciens (Streptomyces aureofaciens).